We begin with the raw amino-acid sequence, 113 residues long: Immunoglobulin lambda variable 2-23 (113 aa).

An N-terminal signal peptide occupies residues 1–19 (MAWALLLLTLLTQDTGSWA). Gln-20 is subject to Pyrrolidone carboxylic acid. Positions 20 to 44 (QSALTQPASVSGSPGQSITISCTGT) are framework-1. Positions 20-113 (QSALTQPASV…EADYYCCSYA (94 aa)) constitute an Ig-like domain. Residues Cys-41 and Cys-109 are joined by a disulfide bond. The tract at residues 45–53 (SSDVGSYNL) is complementarity-determining-1. The tract at residues 54 to 70 (VSWYQQHPGKAPKLMIY) is framework-2. The interval 71-73 (EGS) is complementarity-determining-2. The tract at residues 73 to 92 (SKRPSGVSNRFSGSKSGNTA) is disordered. The framework-3 stretch occupies residues 74–109 (KRPSGVSNRFSGSKSGNTASLTISGLQAEDEADYYC). The segment covering 78 to 92 (GVSNRFSGSKSGNTA) has biased composition (polar residues). The tract at residues 110–113 (CSYA) is complementarity-determining-3.

As to quaternary structure, immunoglobulins are composed of two identical heavy chains and two identical light chains; disulfide-linked.

The protein resides in the secreted. It is found in the cell membrane. Functionally, v region of the variable domain of immunoglobulin light chains that participates in the antigen recognition. Immunoglobulins, also known as antibodies, are membrane-bound or secreted glycoproteins produced by B lymphocytes. In the recognition phase of humoral immunity, the membrane-bound immunoglobulins serve as receptors which, upon binding of a specific antigen, trigger the clonal expansion and differentiation of B lymphocytes into immunoglobulins-secreting plasma cells. Secreted immunoglobulins mediate the effector phase of humoral immunity, which results in the elimination of bound antigens. The antigen binding site is formed by the variable domain of one heavy chain, together with that of its associated light chain. Thus, each immunoglobulin has two antigen binding sites with remarkable affinity for a particular antigen. The variable domains are assembled by a process called V-(D)-J rearrangement and can then be subjected to somatic hypermutations which, after exposure to antigen and selection, allow affinity maturation for a particular antigen. The sequence is that of Immunoglobulin lambda variable 2-23 from Homo sapiens (Human).